The sequence spans 524 residues: Sexual development regulator velC (524 aa).

4 disordered regions span residues 114–195 (NRVL…PVHS), 322–349 (PGSGSGAGSSDTNTNSNDKSRHESMSSY), 380–413 (VDEEPDPNTAPAHPSSTDDSTYDASPRTVTHRFR), and 503–524 (GMGKGRRVGIGSSKVSSRARVE). Composition is skewed to polar residues over residues 131-153 (TTGSLAQYSIQRPSTSRNMENAG) and 178-195 (LDSQYSGSTTAFPSPVHS). Residues 248-500 (SSSSRYRLFI…ELGFVELKTR (253 aa)) form the Velvet domain. The segment covering 393 to 402 (PSSTDDSTYD) has biased composition (polar residues).

This sequence belongs to the velvet family. VelC subfamily. In terms of assembly, interacts with vosA.

Its subcellular location is the nucleus. Its function is as follows. Velvet-domain-containing protein that acts as a positive regulator of sexual development. Positively regulates the production of the sexual fruiting bodies called cleistothecia. This Emericella nidulans (strain FGSC A4 / ATCC 38163 / CBS 112.46 / NRRL 194 / M139) (Aspergillus nidulans) protein is Sexual development regulator velC.